Here is a 719-residue protein sequence, read N- to C-terminus: DNA ligase (719 aa).

NAD(+) contacts are provided by residues 42–46, 92–93, and Glu-126; these read DAAYD and SL. Residue Lys-128 is the N6-AMP-lysine intermediate of the active site. Arg-149, Glu-185, Lys-301, and Lys-325 together coordinate NAD(+). Residues Cys-430, Cys-433, Cys-448, and Cys-454 each coordinate Zn(2+). Positions 640 to 719 constitute a BRCT domain; sequence ATGSPVEGKT…DDWFKLVGED (80 aa).

Belongs to the NAD-dependent DNA ligase family. LigA subfamily. The cofactor is Mg(2+). It depends on Mn(2+) as a cofactor.

The catalysed reaction is NAD(+) + (deoxyribonucleotide)n-3'-hydroxyl + 5'-phospho-(deoxyribonucleotide)m = (deoxyribonucleotide)n+m + AMP + beta-nicotinamide D-nucleotide.. DNA ligase that catalyzes the formation of phosphodiester linkages between 5'-phosphoryl and 3'-hydroxyl groups in double-stranded DNA using NAD as a coenzyme and as the energy source for the reaction. It is essential for DNA replication and repair of damaged DNA. This is DNA ligase from Brucella ovis (strain ATCC 25840 / 63/290 / NCTC 10512).